The sequence spans 86 residues: Elongation factor 1-beta (86 aa).

Belongs to the EF-1-beta/EF-1-delta family.

Its function is as follows. Promotes the exchange of GDP for GTP in EF-1-alpha/GDP, thus allowing the regeneration of EF-1-alpha/GTP that could then be used to form the ternary complex EF-1-alpha/GTP/AAtRNA. The polypeptide is Elongation factor 1-beta (Methanocorpusculum labreanum (strain ATCC 43576 / DSM 4855 / Z)).